The sequence spans 131 residues: MAKTTKGKTPRRARRNISAGRAYVHASYNNTIVTITDLDGNSVAWSSGGTIGYKGSKKGTPYAAQLAAADAVKKAQQAFGMNVVDVIVRGTGSGREQAIRAIQASGIEVKSIMDDSPVPHNGCRPKKKFRA.

The protein belongs to the universal ribosomal protein uS11 family. In terms of assembly, part of the 30S ribosomal subunit. Interacts with proteins S7 and S18. Binds to IF-3.

Located on the platform of the 30S subunit, it bridges several disparate RNA helices of the 16S rRNA. Forms part of the Shine-Dalgarno cleft in the 70S ribosome. In Deinococcus geothermalis (strain DSM 11300 / CIP 105573 / AG-3a), this protein is Small ribosomal subunit protein uS11.